The chain runs to 113 residues: Protein FPV195 (113 aa).

The protein belongs to the poxviruses A31 family.

The protein is Protein FPV195 of Vertebrata (FPV).